The chain runs to 833 residues: Homeobox-leucine zipper protein ATHB-8 (833 aa).

A DNA-binding region (homeobox) is located at residues aspartate 12–lysine 75. Positions arginine 70–leucine 108 form a coiled coil. One can recognise an START domain in the interval arginine 150–valine 378.

The protein belongs to the HD-ZIP homeobox family. Class III subfamily. As to quaternary structure, interacts with ESR1 and ESR2. Interacts with ZPR3.

It is found in the nucleus. In terms of biological role, probable transcription factor involved in the regulation of vascular development. May promote differentiation of precambial and cambial cells. This chain is Homeobox-leucine zipper protein ATHB-8 (ATHB-8), found in Arabidopsis thaliana (Mouse-ear cress).